Reading from the N-terminus, the 372-residue chain is Glutamate 5-kinase (372 aa).

Residue K14 coordinates ATP. The substrate site is built by S54, D141, and N153. An ATP-binding site is contributed by 173-174; sequence TD. Residues 280-358 form the PUA domain; that stretch reads RGNVTLDEGA…DEIESLLGYI (79 aa).

The protein belongs to the glutamate 5-kinase family.

It is found in the cytoplasm. The catalysed reaction is L-glutamate + ATP = L-glutamyl 5-phosphate + ADP. It participates in amino-acid biosynthesis; L-proline biosynthesis; L-glutamate 5-semialdehyde from L-glutamate: step 1/2. Functionally, catalyzes the transfer of a phosphate group to glutamate to form L-glutamate 5-phosphate. The protein is Glutamate 5-kinase of Nitrosospira multiformis (strain ATCC 25196 / NCIMB 11849 / C 71).